Reading from the N-terminus, the 240-residue chain is Adenosine 5'-phosphosulfate reductase (240 aa).

Residues Cys-125, Cys-126, Cys-208, and Cys-211 each coordinate [4Fe-4S] cluster. Cys-234 functions as the Nucleophile; cysteine thiosulfonate intermediate in the catalytic mechanism.

It belongs to the PAPS reductase family. CysH subfamily. [4Fe-4S] cluster serves as cofactor.

It localises to the cytoplasm. It carries out the reaction [thioredoxin]-disulfide + sulfite + AMP + 2 H(+) = adenosine 5'-phosphosulfate + [thioredoxin]-dithiol. It functions in the pathway sulfur metabolism; hydrogen sulfide biosynthesis; sulfite from sulfate. Catalyzes the formation of sulfite from adenosine 5'-phosphosulfate (APS) using thioredoxin as an electron donor. This chain is Adenosine 5'-phosphosulfate reductase, found in Oceanobacillus iheyensis (strain DSM 14371 / CIP 107618 / JCM 11309 / KCTC 3954 / HTE831).